Consider the following 347-residue polypeptide: Quinolinate synthase (347 aa).

Residues His47 and Ser68 each coordinate iminosuccinate. Residue Cys113 participates in [4Fe-4S] cluster binding. Iminosuccinate contacts are provided by residues Tyr139–Asn141 and Ser156. [4Fe-4S] cluster is bound at residue Cys200. Iminosuccinate contacts are provided by residues His226–Glu228 and Thr243. Cys297 contacts [4Fe-4S] cluster.

The protein belongs to the quinolinate synthase family. Type 1 subfamily. It depends on [4Fe-4S] cluster as a cofactor.

It localises to the cytoplasm. It catalyses the reaction iminosuccinate + dihydroxyacetone phosphate = quinolinate + phosphate + 2 H2O + H(+). It participates in cofactor biosynthesis; NAD(+) biosynthesis; quinolinate from iminoaspartate: step 1/1. Catalyzes the condensation of iminoaspartate with dihydroxyacetone phosphate to form quinolinate. This is Quinolinate synthase from Escherichia coli O9:H4 (strain HS).